The primary structure comprises 770 residues: MPYVGVGAQKASTNLTGGPMMKAYAFVLAFFLLGLGVLALGKHHSGRRFNQYSKVSIDDIHETDAKTIQDNIKSENIKKYLRIFTQEPHIAGTDANKKVAYAIASAWTEAGLEDVHTLPYEVLLSYPDFENPNSVVIQNSAGKEIFRSKGVSPVIIPDEQSGKYAGHQWLAYGGNGTVSADVVYINRGNANDFKNLKLMGVDVKGKIALMRYGHGFRGDKVYKAQQAGAIGAILFSDTSDVAQDGVDSEHVYPKTIWMPNEGVQRGSLMHGDGDPLSPFYPSKKELFKGRTIEEAKDDGTLPSIPVLPVSYTTALQLLKRMSGRAVPSDWQGFVGGNLTYKLGPGFVNGEKLTINVHSELKTKRIRNVIGYIRGAEEPDRYIMLGNHFDAWVYGSIDPNSGTAVLAEVARAMMQTINETSWRPARTIVFNAWDAEEFGLIGSTEFVEEFVDVLQKRAVVYINMDCIQGNASLHVDTVPTLEHIAIEAAKHVPNPSKRERSRGRNTVYDTWMKVFPEKKAGRPKIRVPGGGSDHAPFLNFAGVPVINFNYKNYTTFDTYPLYHSMYETPFTNIHLMDTEDLAVHRAIGQYWAELAKTFADEVVLPMNTTNLASVMIKSYLPQLKASISGINVSRIDFESIRTQYALLSKSSQDLLVMSKKFQETMQFTFHSFSQNPYDAKHVNAVNERLISTERCFINPRGVSKHNPSARHVLFSVSDSDSYSNSLMAGIQNAIHSYETSPSKKNLREIINQISTVQYSVICVVNTLRDVI.

Over 1 to 19 the chain is Cytoplasmic; sequence MPYVGVGAQKASTNLTGGP. The chain crosses the membrane as a helical; Signal-anchor for type II membrane protein span at residues 20 to 40; that stretch reads MMKAYAFVLAFFLLGLGVLAL. Topologically, residues 41 to 770 are extracellular; that stretch reads GKHHSGRRFN…CVVNTLRDVI (730 aa). N-linked (GlcNAc...) asparagine glycosylation is found at N175 and N337. A catalytic region spans residues 282-597; it reads SKKELFKGRT…QYWAELAKTF (316 aa). Zn(2+)-binding residues include H387 and D397. N417 is a glycosylation site (N-linked (GlcNAc...) asparagine). The Nucleophile role is filled by E435. E436 and D464 together coordinate Zn(2+). Residues N469 and N551 are each glycosylated (N-linked (GlcNAc...) asparagine). H562 is a Zn(2+) binding site. N606 and N630 each carry an N-linked (GlcNAc...) asparagine glycan.

The protein belongs to the peptidase M28 family. M28B subfamily. Zn(2+) is required as a cofactor.

It localises to the membrane. It carries out the reaction Release of an unsubstituted, C-terminal glutamyl residue, typically from Ac-Asp-Glu or folylpoly-gamma-glutamates.. This Caenorhabditis briggsae protein is Glutamate carboxypeptidase 2 homolog.